The sequence spans 161 residues: Allophycocyanin alpha chain (161 aa).

Asparagine 71 carries the N4-methylasparagine modification. Cysteine 81 contributes to the (2R,3E)-phycocyanobilin binding site.

It belongs to the phycobiliprotein family. As to quaternary structure, heterodimer of an alpha and a beta chain. Contains one covalently linked phycocyanobilin chromophore.

Its subcellular location is the cellular thylakoid membrane. Functionally, light-harvesting photosynthetic bile pigment-protein from the phycobiliprotein complex. Allophycocyanin has a maximum absorption at approximately 650 nanometers. This chain is Allophycocyanin alpha chain (apcA), found in Thermosynechococcus vestitus (strain NIES-2133 / IAM M-273 / BP-1).